A 102-amino-acid polypeptide reads, in one-letter code: Small ribosomal subunit protein uS14 (102 aa).

Belongs to the universal ribosomal protein uS14 family. As to quaternary structure, part of the 30S ribosomal subunit. Contacts proteins S3 and S10.

Functionally, binds 16S rRNA, required for the assembly of 30S particles and may also be responsible for determining the conformation of the 16S rRNA at the A site. The polypeptide is Small ribosomal subunit protein uS14 (Wolbachia pipientis subsp. Culex pipiens (strain wPip)).